The chain runs to 510 residues: NADH-quinone oxidoreductase subunit N (510 aa).

The next 14 membrane-spanning stretches (helical) occupy residues 14–34, 42–62, 84–104, 113–133, 135–155, 170–190, 208–228, 247–267, 286–306, 323–343, 346–366, 390–410, 426–446, and 466–486; these read LLPEFIILGFATFLSLLDLFA, VIGWLSFLGTVIAAIFVIINM, AFKLIFLAGTAFAILISLSYL, GEYYYLLLTGLLGAMVMASSA, LITLFVGLELLSLSSYVLVGL, VVSGSIATAVLLFGMSYVYGL, MAGYQFLVYTAFAFLAVGLAF, PTPVTVFLAVVSKAAGFALIF, FFFEEGSLYLGLMAAASMIIG, SGIAQAGYLLVPFVPPTSLFF, VIFYLFGYLLVSFGAFAVIMV, AIAMSIFLLSLAGIPITVGFF, WLAAIMIITSVISYYYYFGII, and IWTFILIMAIATVFFGAFPGL.

The protein belongs to the complex I subunit 2 family. As to quaternary structure, NDH-1 is composed of 14 different subunits. Subunits NuoA, H, J, K, L, M, N constitute the membrane sector of the complex.

It is found in the cell membrane. It catalyses the reaction a quinone + NADH + 5 H(+)(in) = a quinol + NAD(+) + 4 H(+)(out). In terms of biological role, NDH-1 shuttles electrons from NADH, via FMN and iron-sulfur (Fe-S) centers, to quinones in the respiratory chain. The immediate electron acceptor for the enzyme in this species is believed to be a menaquinone. Couples the redox reaction to proton translocation (for every two electrons transferred, four hydrogen ions are translocated across the cytoplasmic membrane), and thus conserves the redox energy in a proton gradient. The polypeptide is NADH-quinone oxidoreductase subunit N (Brevibacillus brevis (strain 47 / JCM 6285 / NBRC 100599)).